A 435-amino-acid chain; its full sequence is Eukaryotic translation initiation factor 3 subunit E (435 aa).

A PCI domain is found at 219 to 392; that stretch reads FFNHAKGRDL…GHVVMGTQPL (174 aa).

The protein belongs to the eIF-3 subunit E family. Component of the eukaryotic translation initiation factor 3 (eIF-3) complex.

Its subcellular location is the cytoplasm. Functionally, component of the eukaryotic translation initiation factor 3 (eIF-3) complex, which is involved in protein synthesis of a specialized repertoire of mRNAs and, together with other initiation factors, stimulates binding of mRNA and methionyl-tRNAi to the 40S ribosome. The eIF-3 complex specifically targets and initiates translation of a subset of mRNAs involved in cell proliferation. The polypeptide is Eukaryotic translation initiation factor 3 subunit E (eIF3-S6) (Aedes aegypti (Yellowfever mosquito)).